Here is a 178-residue protein sequence, read N- to C-terminus: Peptide deformylase (178 aa).

Fe cation-binding residues include Cys102 and His144. Glu145 is a catalytic residue. His148 contributes to the Fe cation binding site.

This sequence belongs to the polypeptide deformylase family. It depends on Fe(2+) as a cofactor.

It catalyses the reaction N-terminal N-formyl-L-methionyl-[peptide] + H2O = N-terminal L-methionyl-[peptide] + formate. In terms of biological role, removes the formyl group from the N-terminal Met of newly synthesized proteins. Requires at least a dipeptide for an efficient rate of reaction. N-terminal L-methionine is a prerequisite for activity but the enzyme has broad specificity at other positions. The protein is Peptide deformylase of Leptospira interrogans serogroup Icterohaemorrhagiae serovar copenhageni (strain Fiocruz L1-130).